The sequence spans 315 residues: Homoserine kinase (315 aa).

97-107 serves as a coordination point for ATP; that stretch reads PPARGLGSSAT.

This sequence belongs to the GHMP kinase family. Homoserine kinase subfamily.

It localises to the cytoplasm. The catalysed reaction is L-homoserine + ATP = O-phospho-L-homoserine + ADP + H(+). Its pathway is amino-acid biosynthesis; L-threonine biosynthesis; L-threonine from L-aspartate: step 4/5. Its function is as follows. Catalyzes the ATP-dependent phosphorylation of L-homoserine to L-homoserine phosphate. The protein is Homoserine kinase of Prochlorococcus marinus subsp. pastoris (strain CCMP1986 / NIES-2087 / MED4).